The sequence spans 523 residues: Cytochrome P450 monooxygenase bsc5 (523 aa).

A helical transmembrane segment spans residues M16–P36. N-linked (GlcNAc...) asparagine glycosylation is found at N178, N281, and N403. C459 provides a ligand contact to heme.

This sequence belongs to the cytochrome P450 family. Heme serves as cofactor.

The protein resides in the membrane. Its pathway is mycotoxin biosynthesis. Cytochrome P450 monooxygenase; part of the gene cluster that mediates the biosynthesis of the diterpene glucoside brassicicene C. In the first step of the brassicicene C biosynthesis, the bifunctional diterpene synthase bsc8 that possesses both prenyl transferase and terpene cyclase activity, converts isopentenyl diphosphate and dimethylallyl diphosphate into geranylgeranyl diphosphate (GGDP) that is further converted into fusicocca-2,10(14)-diene, the first precursor for brassicicene C. Fusicocca-2,10(14)-diene is then substrate of cytochrome P450 monooxygenase bsc1 for hydroxylation at the C-8 position. Oxidation at C-16 position to aldehyde is then catalyzed by the cytochrome P450 monooyxygenase bsc7, yielding fusicocca-2,10(14)-diene-8-beta,16-diol. Follows the isomerization of the double bond and reduction of aldehyde to alcohol catalyzed by the short-chain dehydrogenase/reductase bsc3 to yield the diol compound fusicocca-1,10(14)-diene-8 beta,16-diol. The next step is the oxidation at the C-3 position of fusicocca-2,10(14)-diene-8-beta,16-diol catalyzed by the alpha-ketoglutarate dependent dioxygenase bsc9, to produce a triol compound. Methylation of the hydroxy group at position 16 is performed by the methyltransferase bsc6. 16-O-methylation is followed by oxidation at the C-13 position to ketone and an alkyl shift of the methyl group leads to brassicicene C. Although the probable acetyltransferase bsc4 is included in the gene cluster, no acetylation reactions are necessary for brassicicene C biosynthesis. However, the fact that brassicicene E, which is a structurally related compound having an acetoxy group at position 12, was previously isolated from another strain of A.brassicicola suggests that the ATCC 96836 strain might also produce a small amount of brassicicene E. This is Cytochrome P450 monooxygenase bsc5 from Alternaria brassicicola (Dark leaf spot agent).